The following is a 470-amino-acid chain: Cysteine--tRNA ligase 1 (470 aa).

A Zn(2+)-binding site is contributed by C29. The 'HIGH' region motif lies at 31 to 41 (PTVYDDAHIGN). The Zn(2+) site is built by C221, H246, and E250. Residues 279-283 (KMSKS) carry the 'KMSKS' region motif. ATP is bound at residue K282.

It belongs to the class-I aminoacyl-tRNA synthetase family. Monomer. Zn(2+) serves as cofactor.

It localises to the cytoplasm. The enzyme catalyses tRNA(Cys) + L-cysteine + ATP = L-cysteinyl-tRNA(Cys) + AMP + diphosphate. The chain is Cysteine--tRNA ligase 1 from Burkholderia lata (strain ATCC 17760 / DSM 23089 / LMG 22485 / NCIMB 9086 / R18194 / 383).